We begin with the raw amino-acid sequence, 360 residues long: 3-isopropylmalate dehydrogenase (360 aa).

Position 76–89 (76–89 (GPKWEPLDYSLRPE)) interacts with NAD(+). 4 residues coordinate substrate: Arg96, Arg106, Arg134, and Asp224. Mg(2+) contacts are provided by Asp224, Asp248, and Asp252. An NAD(+)-binding site is contributed by 282-294 (GSAPDIAGRGIAN).

This sequence belongs to the isocitrate and isopropylmalate dehydrogenases family. LeuB type 1 subfamily. In terms of assembly, homodimer. Requires Mg(2+) as cofactor. Mn(2+) is required as a cofactor.

The protein localises to the cytoplasm. It carries out the reaction (2R,3S)-3-isopropylmalate + NAD(+) = 4-methyl-2-oxopentanoate + CO2 + NADH. It participates in amino-acid biosynthesis; L-leucine biosynthesis; L-leucine from 3-methyl-2-oxobutanoate: step 3/4. Its function is as follows. Catalyzes the oxidation of 3-carboxy-2-hydroxy-4-methylpentanoate (3-isopropylmalate) to 3-carboxy-4-methyl-2-oxopentanoate. The product decarboxylates to 4-methyl-2 oxopentanoate. In Methylococcus capsulatus (strain ATCC 33009 / NCIMB 11132 / Bath), this protein is 3-isopropylmalate dehydrogenase.